A 102-amino-acid chain; its full sequence is Small ribosomal subunit protein uS10 (102 aa).

It belongs to the universal ribosomal protein uS10 family. Part of the 30S ribosomal subunit.

Functionally, involved in the binding of tRNA to the ribosomes. This chain is Small ribosomal subunit protein uS10, found in Leuconostoc citreum (strain KM20).